The following is a 344-amino-acid chain: L-sulfolactate dehydrogenase (344 aa).

It belongs to the LDH2/MDH2 oxidoreductase family.

The protein localises to the cytoplasm. It catalyses the reaction a (2S)-2-hydroxycarboxylate + NAD(+) = a 2-oxocarboxylate + NADH + H(+). The protein operates within cofactor biosynthesis; coenzyme M biosynthesis; sulfoacetaldehyde from phosphoenolpyruvate and sulfite: step 3/4. Its pathway is cofactor biosynthesis; 5,6,7,8-tetrahydromethanopterin biosynthesis. Functionally, catalyzes the reduction of sulfopyruvate to (R)-sulfolactate much more efficiently than the reverse reaction. Also catalyzes the reduction of oxaloacetate, alpha-ketoglutarate, and to a much lower extent, KHTCA, but not pyruvate. Involved in the biosynthesis of both coenzyme M (with (R)-sulfolactate) and methanopterin (with alpha-ketoglutarate). The polypeptide is L-sulfolactate dehydrogenase (comC) (Methanocaldococcus jannaschii (strain ATCC 43067 / DSM 2661 / JAL-1 / JCM 10045 / NBRC 100440) (Methanococcus jannaschii)).